We begin with the raw amino-acid sequence, 554 residues long: (+)-delta-cadinene synthase isozyme XC14 (554 aa).

Residues 1-16 are compositionally biased toward low complexity; it reads MASQVSQMPSSSPLSS. The tract at residues 1–23 is disordered; that stretch reads MASQVSQMPSSSPLSSNKDEMRP. Mg(2+) is bound by residues D307, D311, and D451. The short motif at 307–311 is the DDXXD motif element; it reads DDTYD.

The protein belongs to the terpene synthase family. It depends on Mg(2+) as a cofactor.

It carries out the reaction (2E,6E)-farnesyl diphosphate = (1S,8aR)-delta-cadinene + diphosphate. Its pathway is secondary metabolite biosynthesis; terpenoid biosynthesis. Its function is as follows. Responsible for the cyclization of trans,trans-farnesyl diphosphate (FPP) to (+)-delta cadinene. The polypeptide is (+)-delta-cadinene synthase isozyme XC14 (Gossypium arboreum (Tree cotton)).